The primary structure comprises 465 residues: Gamma-aminobutyric acid receptor subunit rho-2 (465 aa).

An N-terminal signal peptide occupies residues 1-20; sequence MPYFMRLALFLFCLMALVES. At 21–260 the chain is on the extracellular side; it reads RKPRRKRWTG…LYINFTLRRH (240 aa). Residue Arg105 coordinates 4-aminobutanoate. N-linked (GlcNAc...) asparagine glycosylation occurs at Asn120. Ser169 lines the 4-aminobutanoate pocket. A disulfide bond links Cys178 and Cys192. Glu197 provides a ligand contact to 4-aminobutanoate. An N-linked (GlcNAc...) asparagine glycan is attached at Asn254. Residues 261–281 form a helical membrane-spanning segment; the sequence is IFFFLLQTYFPATLMVMLSWV. The Cytoplasmic segment spans residues 282-293; it reads SFWIDHRAVPAR. A helical membrane pass occupies residues 294–314; that stretch reads VSLGIMTVLTMSTIITGVNAS. Residues 315 to 325 are Extracellular-facing; that stretch reads MPRVSYIRAVD. Residues 326–346 form a helical membrane-spanning segment; that stretch reads IYLWVSFVFVFLSVLEYAAVN. At 347 to 443 the chain is on the cytoplasmic side; sequence YLTTVQEQKE…IFQNTHAIDK (97 aa). Residues 444–464 traverse the membrane as a helical segment; it reads YSRLIFPAFYIVFNLIYWSVF. Residue Ser465 is a topological domain, extracellular.

It belongs to the ligand-gated ion channel (TC 1.A.9) family. Gamma-aminobutyric acid receptor (TC 1.A.9.5) subfamily. GABRR2 sub-subfamily. Three rho subunits (rho-1/GBRR1, rho-2/GBRR2 and rho-3/GBRR3) coassemble either to form functional homopentamers or heteropentamers. Rho-2 is unable to form a functional homopentamer. Interacts with SQSTM1. Expressed in spinal cord and in cerebellum. Expressed in retina.

It localises to the postsynaptic cell membrane. It is found in the cell membrane. It catalyses the reaction chloride(in) = chloride(out). In contrast with rho-1 and rho-3 homopentamers, rho-2 GABAARs are not inhibited by picrotoxin. Rho subunit of the pentameric ligand-gated chloride channels responsible for mediating the effects of gamma-aminobutyric acid (GABA), the major inhibitory neurotransmitter in the brain. Rho-containing GABA-gated chloride channels are a subclass of GABA(A) receptors (GABAARs) entirely composed of rho subunits, where GABA molecules bind at the rho intersubunit interfaces. When activated by GABA, rho-GABAARs selectively allow the flow of chloride anions across the cell membrane down their electrochemical gradient. Rho-2 GABAARs may contribute to the regulation of glial development in the cerebellum by controlling extrasynaptic transmission. Rho-2 GABAARs are also involved in neuronal tonic (extrasynaptic) and phasic (synaptic) transmission in the Purkinje neurons of the cerebellum. Rho-2 GABAARs expressed in retina may play a role in retinal neurotransmission. This Rattus norvegicus (Rat) protein is Gamma-aminobutyric acid receptor subunit rho-2.